We begin with the raw amino-acid sequence, 91 residues long: MKLVMLLVVVSAMLVLGGAQTASQFYCGDFLARTMSSLCWSDMQKRSGSQYAGYGWPWLPPFSSSRGKRGIVDECCYRPCTIDVLMSYCDN.

Residues 1 to 19 form the signal peptide; that stretch reads MKLVMLLVVVSAMLVLGGA. Position 20 is a pyrrolidone carboxylic acid (glutamine 20). 3 disulfides stabilise this stretch: cysteine 27–cysteine 76, cysteine 39–cysteine 89, and cysteine 75–cysteine 80. Positions 47 to 67 are cleaved as a propeptide — c peptide like; the sequence is SGSQYAGYGWPWLPPFSSSRG.

The protein belongs to the insulin family. As to quaternary structure, heterodimer of a B chain and an A chain linked by two disulfide bonds.

Its subcellular location is the secreted. Brain peptide responsible for activation of prothoracic glands to produce ecdysone in insects. The polypeptide is Bombyxin C-1 (BBXC1) (Bombyx mori (Silk moth)).